A 334-amino-acid polypeptide reads, in one-letter code: Malate dehydrogenase, mitochondrial (334 aa).

Residues M1 to P17 constitute a mitochondrion transit peptide. NAD(+) is bound by residues G24–G30 and D50. Residues R99 and R105 each coordinate substrate. NAD(+) is bound by residues N112 and I135–N137. Substrate is bound by residues N137 and R171. At S177 the chain carries Phosphoserine. The active-site Proton acceptor is the H195. A Phosphothreonine modification is found at T199. M245 contacts NAD(+).

Belongs to the LDH/MDH superfamily. MDH type 1 family. In terms of assembly, homodimer.

The protein resides in the mitochondrion matrix. The catalysed reaction is (S)-malate + NAD(+) = oxaloacetate + NADH + H(+). This chain is Malate dehydrogenase, mitochondrial (MDH1), found in Saccharomyces cerevisiae (strain ATCC 204508 / S288c) (Baker's yeast).